Reading from the N-terminus, the 68-residue chain is Large ribosomal subunit protein bL35 (68 aa).

2 stretches are compositionally biased toward basic residues: residues 1–11 and 19–29; these read MPKLKTRSSAK and SGKVKHGKAFA. A disordered region spans residues 1 to 54; the sequence is MPKLKTRSSAKKRFDVKKSGKVKHGKAFAKHLFTFSKTPKSKRSNRGTGHLRDM.

The protein belongs to the bacterial ribosomal protein bL35 family.

In Myxococcus xanthus (strain DK1622), this protein is Large ribosomal subunit protein bL35.